The following is a 77-amino-acid chain: Acyl carrier protein (77 aa).

A Carrier domain is found at 2-77 (SSIEKRVKEI…DAIDYITEHT (76 aa)). The residue at position 37 (serine 37) is an O-(pantetheine 4'-phosphoryl)serine.

This sequence belongs to the acyl carrier protein (ACP) family. Post-translationally, 4'-phosphopantetheine is transferred from CoA to a specific serine of apo-ACP by AcpS. This modification is essential for activity because fatty acids are bound in thioester linkage to the sulfhydryl of the prosthetic group.

The protein resides in the cytoplasm. The protein operates within lipid metabolism; fatty acid biosynthesis. Functionally, carrier of the growing fatty acid chain in fatty acid biosynthesis. This is Acyl carrier protein from Geobacter sulfurreducens (strain ATCC 51573 / DSM 12127 / PCA).